Consider the following 394-residue polypeptide: NAD(P)H-quinone oxidoreductase subunit H (394 aa).

It belongs to the complex I 49 kDa subunit family. NDH-1 can be composed of about 15 different subunits; different subcomplexes with different compositions have been identified which probably have different functions.

It localises to the cellular thylakoid membrane. It catalyses the reaction a plastoquinone + NADH + (n+1) H(+)(in) = a plastoquinol + NAD(+) + n H(+)(out). The catalysed reaction is a plastoquinone + NADPH + (n+1) H(+)(in) = a plastoquinol + NADP(+) + n H(+)(out). NDH-1 shuttles electrons from an unknown electron donor, via FMN and iron-sulfur (Fe-S) centers, to quinones in the respiratory and/or the photosynthetic chain. The immediate electron acceptor for the enzyme in this species is believed to be plastoquinone. Couples the redox reaction to proton translocation, and thus conserves the redox energy in a proton gradient. Cyanobacterial NDH-1 also plays a role in inorganic carbon-concentration. This is NAD(P)H-quinone oxidoreductase subunit H from Microcystis aeruginosa (strain NIES-843 / IAM M-2473).